The chain runs to 523 residues: GMP synthase [glutamine-hydrolyzing] (523 aa).

A Glutamine amidotransferase type-1 domain is found at 8–205 (KILILDFGSQ…VVDICGCETN (198 aa)). Cys-85 functions as the Nucleophile in the catalytic mechanism. Residues His-179 and Glu-181 contribute to the active site. Residues 206 to 398 (WTAENIIEDA…LGLPAEMLNR (193 aa)) enclose the GMPS ATP-PPase domain. 233–239 (SGGVDSS) contributes to the ATP binding site.

In terms of assembly, homodimer.

The catalysed reaction is XMP + L-glutamine + ATP + H2O = GMP + L-glutamate + AMP + diphosphate + 2 H(+). It participates in purine metabolism; GMP biosynthesis; GMP from XMP (L-Gln route): step 1/1. In terms of biological role, catalyzes the synthesis of GMP from XMP. This Histophilus somni (strain 129Pt) (Haemophilus somnus) protein is GMP synthase [glutamine-hydrolyzing].